Reading from the N-terminus, the 211-residue chain is Octanoyltransferase (211 aa).

The BPL/LPL catalytic domain occupies 32–211; the sequence is DHEPEIIYLV…IQTEFNKIFK (180 aa). Substrate contacts are provided by residues 71–78, 145–147, and 158–160; these read RGGKFTFH, AIG, and GVA. The active-site Acyl-thioester intermediate is the C176.

This sequence belongs to the LipB family.

It localises to the cytoplasm. It catalyses the reaction octanoyl-[ACP] + L-lysyl-[protein] = N(6)-octanoyl-L-lysyl-[protein] + holo-[ACP] + H(+). It functions in the pathway protein modification; protein lipoylation via endogenous pathway; protein N(6)-(lipoyl)lysine from octanoyl-[acyl-carrier-protein]: step 1/2. Functionally, catalyzes the transfer of endogenously produced octanoic acid from octanoyl-acyl-carrier-protein onto the lipoyl domains of lipoate-dependent enzymes. Lipoyl-ACP can also act as a substrate although octanoyl-ACP is likely to be the physiological substrate. The polypeptide is Octanoyltransferase (Rickettsia massiliae (strain Mtu5)).